The sequence spans 91 residues: Probable Fe(2+)-trafficking protein (91 aa).

It belongs to the Fe(2+)-trafficking protein family.

Its function is as follows. Could be a mediator in iron transactions between iron acquisition and iron-requiring processes, such as synthesis and/or repair of Fe-S clusters in biosynthetic enzymes. The protein is Probable Fe(2+)-trafficking protein of Glaesserella parasuis serovar 5 (strain SH0165) (Haemophilus parasuis).